Here is a 437-residue protein sequence, read N- to C-terminus: Bile acid CoA-transferase BaiK (437 aa).

Catalysis depends on Asp171, which acts as the Nucleophile.

Belongs to the CoA-transferase III family.

The catalysed reaction is deoxycholoyl-CoA + cholate = choloyl-CoA + deoxycholate. It carries out the reaction allodeoxycholoyl-CoA + cholate = allodeoxycholate + choloyl-CoA. It catalyses the reaction allocholate + deoxycholoyl-CoA = allocholoyl-CoA + deoxycholate. The enzyme catalyses allocholate + allodeoxycholoyl-CoA = allocholoyl-CoA + allodeoxycholate. The catalysed reaction is ursodeoxycholate + deoxycholoyl-CoA = ursodeoxycholoyl-CoA + deoxycholate. It carries out the reaction allodeoxycholoyl-CoA + ursodeoxycholate = ursodeoxycholoyl-CoA + allodeoxycholate. It participates in lipid metabolism; bile acid biosynthesis. Functions in the bile acid 7alpha-dehydroxylation pathway, which forms secondary bile acids via the 7alpha-dehydroxylation of primary bile acids, and is carried out by intestinal anaerobic bacteria. Acts as a bile acid CoA transferase with broad bile acid substrate specificity. Catalyzes the transfer of the CoA moiety of secondary bile acid-CoA compounds to primary bile acids. Can use deoxycholoyl-CoA and allodeoxycholoyl-CoA as bile acid CoA donors and cholate, allocholate and ursodeoxycholate as bile acid CoA acceptors. Shows no activity when lithocholoyl-CoA is used as the CoA donor. This chain is Bile acid CoA-transferase BaiK, found in Clostridium scindens (strain JCM 10418 / VPI 12708).